A 424-amino-acid polypeptide reads, in one-letter code: Histidine--tRNA ligase (424 aa).

The protein belongs to the class-II aminoacyl-tRNA synthetase family. In terms of assembly, homodimer.

The protein localises to the cytoplasm. It carries out the reaction tRNA(His) + L-histidine + ATP = L-histidyl-tRNA(His) + AMP + diphosphate + H(+). In Marinomonas sp. (strain MWYL1), this protein is Histidine--tRNA ligase.